Reading from the N-terminus, the 314-residue chain is Serine/threonine-protein phosphatase CPPED1 (314 aa).

Phosphoserine is present on Ser2. The tract at residues 47–250 (KAWSTGDCDN…KVVFSGHYHR (204 aa)) is catalytic. Positions 53, 90, 127, and 247 each coordinate a divalent metal cation. Position 294 is a phosphoserine (Ser294).

It belongs to the metallophosphoesterase superfamily. CPPED1 family. A divalent metal cation is required as a cofactor.

The protein localises to the cytoplasm. It carries out the reaction O-phospho-L-seryl-[protein] + H2O = L-seryl-[protein] + phosphate. The enzyme catalyses O-phospho-L-threonyl-[protein] + H2O = L-threonyl-[protein] + phosphate. Functionally, protein phosphatase that dephosphorylates AKT family kinase specifically at 'Ser-473', blocking cell cycle progression and promoting cell apoptosis. May play an inhibitory role in glucose uptake by adipocytes. The protein is Serine/threonine-protein phosphatase CPPED1 (CPPED1) of Pongo abelii (Sumatran orangutan).